The chain runs to 210 residues: Fibrillarin-like rRNA/tRNA 2'-O-methyltransferase (210 aa).

S-adenosyl-L-methionine contacts are provided by residues 70–71, 88–89, 113–114, and 133–136; these read TT, EY, DA, and DIAQ.

It belongs to the methyltransferase superfamily. Fibrillarin family. Interacts with nop5. Component of box C/D small ribonucleoprotein (sRNP) particles that contain rpl7ae, FlpA and nop5, plus a guide RNA.

Functionally, involved in pre-rRNA and tRNA processing. Utilizes the methyl donor S-adenosyl-L-methionine to catalyze the site-specific 2'-hydroxyl methylation of ribose moieties in rRNA and tRNA. Site specificity is provided by a guide RNA that base pairs with the substrate. Methylation occurs at a characteristic distance from the sequence involved in base pairing with the guide RNA. The protein is Fibrillarin-like rRNA/tRNA 2'-O-methyltransferase of Archaeoglobus fulgidus (strain ATCC 49558 / DSM 4304 / JCM 9628 / NBRC 100126 / VC-16).